The primary structure comprises 295 residues: Fatty acid desaturase 4-like 1, chloroplastic (295 aa).

The transit peptide at 1 to 29 (MAVSFQTKNPLRPITNIPRSYGPTRVRVT) directs the protein to the chloroplast. 3 helical membrane-spanning segments follow: residues 72–92 (WVAA…IGGF), 102–122 (LACY…HWAI), and 175–195 (LAIN…CILL).

This sequence belongs to the fatty acid desaturase CarF family.

It is found in the plastid. Its subcellular location is the chloroplast membrane. It functions in the pathway lipid metabolism; fatty acid metabolism. Functionally, fatty acid desaturase involved in the production of chloroplast-specific phosphatidylglycerol molecular species. Catalyzes the formation of a trans double bond introduced close to the carboxyl group of palmitic acid, which is specifically esterified to the sn-2 glyceryl carbon of phosphatidylglycerol. This Arabidopsis thaliana (Mouse-ear cress) protein is Fatty acid desaturase 4-like 1, chloroplastic (FAD4L1).